Consider the following 329-residue polypeptide: DNA-directed RNA polymerase subunit alpha (329 aa).

Residues 1–235 form an alpha N-terminal domain (alpha-NTD) region; it reads MQGFVEDFLK…QQLEAFVDLR (235 aa). An alpha C-terminal domain (alpha-CTD) region spans residues 249 to 329; the sequence is FEPVLLRPVD…NWPPKSLLED (81 aa).

The protein belongs to the RNA polymerase alpha chain family. As to quaternary structure, homodimer. The RNAP catalytic core consists of 2 alpha, 1 beta, 1 beta' and 1 omega subunit. When a sigma factor is associated with the core the holoenzyme is formed, which can initiate transcription.

It catalyses the reaction RNA(n) + a ribonucleoside 5'-triphosphate = RNA(n+1) + diphosphate. DNA-dependent RNA polymerase catalyzes the transcription of DNA into RNA using the four ribonucleoside triphosphates as substrates. This chain is DNA-directed RNA polymerase subunit alpha, found in Buchnera aphidicola subsp. Cinara cedri (strain Cc).